We begin with the raw amino-acid sequence, 346 residues long: Elongation factor Ts (346 aa).

The interval 80–83 (TDFV) is involved in Mg(2+) ion dislocation from EF-Tu.

It belongs to the EF-Ts family.

The protein resides in the cytoplasm. Functionally, associates with the EF-Tu.GDP complex and induces the exchange of GDP to GTP. It remains bound to the aminoacyl-tRNA.EF-Tu.GTP complex up to the GTP hydrolysis stage on the ribosome. This is Elongation factor Ts from Streptococcus pneumoniae serotype 19F (strain G54).